Reading from the N-terminus, the 267-residue chain is UDP-glucose:undecaprenyl-phosphate glucose-1-phosphate transferase (267 aa).

The chain crosses the membrane as a helical span at residues 83 to 103 (VAAALLTALFAPLLLLAALAI).

The protein belongs to the bacterial sugar transferase family.

It is found in the cell membrane. It catalyses the reaction di-trans,octa-cis-undecaprenyl phosphate + UDP-alpha-D-glucose = alpha-D-glucosyl di-trans,octa-cis-undecaprenyl diphosphate + UMP. Functionally, is likely the initiating enzyme for holdfast polysaccharide synthesis. Catalyzes the transfer of the glucose-1-phosphate moiety from UDP-Glc onto the carrier lipid undecaprenyl phosphate (C55-P), forming a phosphoanhydride bond yielding to glucosyl-pyrophosphoryl-undecaprenol (Glc-PP-C55). Also possesses a weak galactose-1-P transferase activity. This Caulobacter vibrioides (strain ATCC 19089 / CIP 103742 / CB 15) (Caulobacter crescentus) protein is UDP-glucose:undecaprenyl-phosphate glucose-1-phosphate transferase (pssY).